Reading from the N-terminus, the 20-residue chain is Putative beta-neurotoxin (20 aa).

An LCN-type CS-alpha/beta domain is found at 1 to 20 (KDGYLVGSDGCKYSCLTRPG).

As to expression, expressed by the venom gland.

Its subcellular location is the secreted. Functionally, beta toxins bind voltage-independently at site-4 of sodium channels (Nav) and shift the voltage of activation toward more negative potentials thereby affecting sodium channel activation and promoting spontaneous and repetitive firing. This Tityus pachyurus (Colombian scorpion) protein is Putative beta-neurotoxin.